Consider the following 1442-residue polypeptide: MTVFRQENVDDYYDTGEELGSGQFAVVKKCREKSTGLQYAAKFIKKRRTKSSRRGVSREDIEREVSILKEIRHPNVITLHEVYENKTDVILILELVAGGELFDFLAEKESLTEEEATEFLKQILSGVYYLHSLQIAHFDLKPENIMLLDRNVPKPRIKIIDFGLAHKIDFGNEFKNIFGTPEFVAPEIVNYEPLGLEADMWSIGVITYILLSGASPFLGDTKQETLANVSAVNYDFEEEFFRNTSTLAKDFIRRLLVKDPKKRMTIQDSLQHPWIKPKDTQQALSRKASAVNMEKFKKFAARKKWKQSVRLISLCQRLSRSFLSRSNMSVARSDDTLDEEDSFVMKAIIHAINDDNVPGLQHLLGSLSSYDVNQPNKHGTPPLLIAAGCGNIQMLQLLIKRGSRIDVQDKGGSNAIYWASRHGHVDTLKFLNENKCPLDVKDKSGETALHVAARYGHADVVQLLCSFGSNPDFQDKEEETPLHCAAWHGYYSVAKALCEVGCNVNIKNREGETPLLTASARGYHDIVECLAEHGADLNASDKDGHIALHLAVRRCQMEVIKTLLGHGSFVDFQDRHGNTPLHVACKDGSAPIVVALCEASCNLDISNKYGRTPLHLAANNGILDVVRYLCLMGANVEALTSDGKTAEDLAKAEQHEHVAGLLARLRKDTHRGLFIQQLRPTQNLQPRIKLKLFGHSGSGKSTLVESLKCGLLRSFFRRRRPRLSSTNSTRFPPSPLAAKPTVSVSINNLYPGCENVSVRSRSMMFEPGLTKGMLEVFVAPSHHLHCSTDDQSTKAIDIQNAYLNGVGDFSVWEFSGNPVYFCCYDYFAANDPTSIHIIVFSLEEPYEIQLNQVIFWLSFLKSLVPVEEPIAFGGKLKNPLRVVLVATHADIMNIPRPAGGEFGYDKDTSLLKEIRNRFGNDLHVSNKLFVLDAGASGSKDIKVLRNHLQEIRSQIVSGCSPMTHLCEKIISTLPSWRKLNGPNQLMSLQQFVYDVQDQLNPLASEDDLRRIAQQLHSTGEINIMQSETVQDVLLLDPRWLCTNVLGKLLSVETPRALHHYRGRYTMEDIQRLVPDSDVEELLQILDAMDICARDLSSGTMVDIPALIKTDSLQRSWADEEDEVMVYGGVRIVPVEHLTPFPCGIFHKVQVNLCRWIHQQSAEGDADIRLWVSGCRIANRGAELLVLLVNHGQGIEVQVRGLETEKIKCCLLLDSVCSTIETVMATTLPGLLTVKHYLSPQQLREHHEPVMVYQPRDFFRAQTLKESSLTNTMGGYKESFSSITCFGCHDVYSQASLGMDIHASDLSLLTRRKLSRLLDPPDPMGKDWCLLAMNLGLPDMVAKHNVNNRASRDFLPSPVHALLQEWTSYPESTVGILISKLRELGRRDAADFLLKASSVFKINLDGNGQEAYASSCNSGTSYNSISSVVSRRDSHAWTPLYDL.

Residues 13-275 (YDTGEELGSG…IQDSLQHPWI (263 aa)) enclose the Protein kinase domain. ATP contacts are provided by residues 19–27 (LGSGQFAVV) and Lys42. Catalysis depends on Asp139, which acts as the Proton acceptor. The segment at 267–334 (QDSLQHPWIK…RSNMSVARSD (68 aa)) is calmodulin-binding. At Ser289 the chain carries Phosphoserine; by RPS6KA1 and RPS6KA3. Positions 292–301 (NMEKFKKFAA) are autoinhibitory domain. Phosphoserine; by autocatalysis is present on Ser308. Residues Ser319 and Ser333 each carry the phosphoserine modification. ANK repeat units follow at residues 378–407 (HGTP…RIDV), 411–440 (GGSN…PLDV), 444–473 (SGET…NPDF), 477–506 (EEET…NVNI), 510–539 (EGET…DLNA), 543–572 (DGHI…FVDF), 576–605 (HGNT…NLDI), and 609–638 (YGRT…NVEA). A Roc domain is found at 681–955 (TQNLQPRIKL…NHLQEIRSQI (275 aa)). Phosphoserine; by MAPK1 is present on Ser734. The stretch at 875-904 (KLKNPLRVVLVATHADIMNIPRPAGGEFGY) is one ANK 9 repeat. Residue Ser1115 is modified to Phosphoserine. One copy of the ANK 10 repeat lies at 1164–1196 (DADIRLWVSGCRIANRGAELLVLLVNHGQGIEV). In terms of domain architecture, Death spans 1312–1396 (KLSRLLDPPD…DAADFLLKAS (85 aa)). Position 1433 is a phosphoserine (Ser1433).

This sequence belongs to the protein kinase superfamily. CAMK Ser/Thr protein kinase family. DAP kinase subfamily. Interacts with KLHL20. Interacts (via death domain) with MAPK1 and MAPK3. Interacts with MAP1B (via N-terminus). Interacts with PRKD1 in an oxidative stress-regulated manner. Interacts with PIN1, PDCD6, BECN1, TSC2 and STX1A. Interacts (via kinase domain) with DAPK3 (via kinase domain). Interacts with GRINB. Interacts (via death domain) with UNC5B (via death domain). Interacts with UNC5C (via death domain). It depends on Mg(2+) as a cofactor. Post-translationally, ubiquitinated by the BCR(KLHL20) E3 ubiquitin ligase complex, leading to its degradation by the proteasome. In terms of processing, in response to mitogenic stimulation (PMA or EGF), phosphorylated at Ser-289; phosphorylation suppresses DAPK1 pro-apoptotic function. Autophosphorylation at Ser-308 inhibits its catalytic activity. Phosphorylation at Ser-734 by MAPK1 increases its catalytic activity and promotes cytoplasmic retention of MAPK1. Endoplasmic-stress can cause dephosphorylation at Ser-308. As to expression, high levels in bladder, uterus, vas deferens, lung, liver and kidney.

It catalyses the reaction L-seryl-[protein] + ATP = O-phospho-L-seryl-[protein] + ADP + H(+). It carries out the reaction L-threonyl-[protein] + ATP = O-phospho-L-threonyl-[protein] + ADP + H(+). Its activity is regulated as follows. Activated by Ca(2+)/calmodulin. Regulated by a locking mechanism, involving autophosphorylation at Ser-308 and calmodulin binding. In the inactive state, Ser-308 is phosphorylated. Activation involves its dephosphorylation and a release-of-autoinhibition mechanism where binding of calmodulin induces a conformational change that relieves the steric block of the active site by the autoinhibitory domain. Activity is modulated by UNC5B and NTN1. UNC5B activates it by inhibiting the phosphorylation at Ser-308, whereas NTN1 inhibits UNC5B-mediated activation of DAPK1. Endoplasmic-stress activates by causing Ser-308 dephosphorylation. Functionally, calcium/calmodulin-dependent serine/threonine kinase involved in multiple cellular signaling pathways that trigger cell survival, apoptosis, and autophagy. Regulates both type I apoptotic and type II autophagic cell deaths signal, depending on the cellular setting. The former is caspase-dependent, while the latter is caspase-independent and is characterized by the accumulation of autophagic vesicles. Phosphorylates PIN1 resulting in inhibition of its catalytic activity, nuclear localization, and cellular function. Phosphorylates TPM1, enhancing stress fiber formation in endothelial cells. Phosphorylates STX1A and significantly decreases its binding to STXBP1. Phosphorylates PRKD1 and regulates JNK signaling by binding and activating PRKD1 under oxidative stress. Phosphorylates BECN1, reducing its interaction with BCL2 and BCL2L1 and promoting the induction of autophagy. Phosphorylates TSC2, disrupting the TSC1-TSC2 complex and stimulating mTORC1 activity in a growth factor-dependent pathway. Phosphorylates RPS6, MYL9 and DAPK3. Acts as a signaling amplifier of NMDA receptors at extrasynaptic sites for mediating brain damage in stroke. Cerebral ischemia recruits DAPK1 into the NMDA receptor complex and it phosphorylates GRINB at Ser-1303 inducing injurious Ca(2+) influx through NMDA receptor channels, resulting in an irreversible neuronal death. Required together with DAPK3 for phosphorylation of RPL13A upon interferon-gamma activation which is causing RPL13A involvement in transcript-selective translation inhibition. This chain is Death-associated protein kinase 1 (Dapk1), found in Mus musculus (Mouse).